The primary structure comprises 388 residues: AdoMet-dependent heme synthase (388 aa).

Residues 1-12 (MHNANHPHGNGH) are compositionally biased toward low complexity. The tract at residues 1–29 (MHNANHPHGNGHPAEKKGMGAHSGAMNMP) is disordered. Residues 34–257 (DGSPACRLIA…TSMHLKATCA (224 aa)) form the Radical SAM core domain. The [4Fe-4S] cluster site is built by C50, C54, and C57.

It belongs to the radical SAM superfamily. [4Fe-4S] cluster serves as cofactor.

The catalysed reaction is Fe-coproporphyrin III + 2 S-adenosyl-L-methionine = heme b + 2 5'-deoxyadenosine + 2 L-methionine + 2 CO2. It participates in porphyrin-containing compound metabolism; protoheme biosynthesis. Functionally, involved in siroheme-dependent heme b biosynthesis. Catalyzes the conversion of Fe-coproporphyrin III into heme by the oxidative decarboxylation of two propionate side chains. This Oleidesulfovibrio alaskensis (strain ATCC BAA-1058 / DSM 17464 / G20) (Desulfovibrio alaskensis) protein is AdoMet-dependent heme synthase.